The chain runs to 445 residues: MAAQASEDLKKLDLNGQAGDSKAAAATAGQAEAGEAEDDSDDDEVDGNAAPEGAASGAAKKKKKRKPKKKKKGGAKVQSSPPRVPISQLFPNNQYPEGEIVEYKNENSYRTTNEEKRYLDRMNNDFLQEYRQGAEVHRQVRQYAQKNIKPGQTLTEIAEGIEDAVRALTGHQGLEEGDNLKGGMGFPCGLSINHCAAHYTPNAGNKMVLQQGDVMKVDFGAHLNGRIVDSAFTMAFDPVYDPLLEAVKDATNTGIREAGIDVRMSDIGAAIQETMESYEVEINGQMHPVKCIRNLNGHNIDQHVIHGGKSVPIVKGGDQTKMEEGEVFAIETFGSTGKGYVREDMETSHYALVPNATPVPLRLSSAKNLLNVINKNFGTLPFCRRYLDRLGQDKYLLGLNNLVSSGIVQDYPPLCDIKGSYTAQFEHTIVLRPTVKEVISRGDDY.

Residues 1–92 are disordered; the sequence is MAAQASEDLK…RVPISQLFPN (92 aa). The span at 18 to 33 shows a compositional bias: low complexity; it reads AGDSKAAAATAGQAEA. Residues 34-46 are compositionally biased toward acidic residues; the sequence is GEAEDDSDDDEVD. Low complexity predominate over residues 47 to 58; it reads GNAAPEGAASGA. Residues 59–74 show a composition bias toward basic residues; sequence AKKKKKRKPKKKKKGG. H198 contacts substrate. A divalent metal cation-binding residues include D218, D229, and H298. H306 provides a ligand contact to substrate. E331 and E426 together coordinate a divalent metal cation.

It belongs to the peptidase M24A family. Methionine aminopeptidase eukaryotic type 2 subfamily. Co(2+) serves as cofactor. Requires Zn(2+) as cofactor. Mn(2+) is required as a cofactor. The cofactor is Fe(2+).

The protein localises to the cytoplasm. It carries out the reaction Release of N-terminal amino acids, preferentially methionine, from peptides and arylamides.. Its function is as follows. Cotranslationally removes the N-terminal methionine from nascent proteins. The N-terminal methionine is often cleaved when the second residue in the primary sequence is small and uncharged (Met-Ala-, Cys, Gly, Pro, Ser, Thr, or Val). The polypeptide is Methionine aminopeptidase 2-2 (Aspergillus terreus (strain NIH 2624 / FGSC A1156)).